Reading from the N-terminus, the 197-residue chain is MAYEDLIKSIESAAEEKKQEVLRNAEREVEAILREAETESSAIHAQYLEKAKRDLILENNRQKFLAKQEVKKRISAVRQKLIDDAFSRSKEKISGIRSDPSYPALYERLTREVISALAGEEIILHIDPADSKICSDVLKKTGIVCDIMQDITTIGGLSGTSADGRIRAYNTLESRMERIRDTSTLEIINLILGGPDG.

This sequence belongs to the V-ATPase E subunit family. Has multiple subunits with at least A(3), B(3), C, D, E, F, H, I and proteolipid K(x).

It is found in the cell membrane. Its function is as follows. Component of the A-type ATP synthase that produces ATP from ADP in the presence of a proton gradient across the membrane. The protein is A-type ATP synthase subunit E 2 of Methanospirillum hungatei JF-1 (strain ATCC 27890 / DSM 864 / NBRC 100397 / JF-1).